Here is a 117-residue protein sequence, read N- to C-terminus: Putative pterin-4-alpha-carbinolamine dehydratase (117 aa).

It belongs to the pterin-4-alpha-carbinolamine dehydratase family.

The enzyme catalyses (4aS,6R)-4a-hydroxy-L-erythro-5,6,7,8-tetrahydrobiopterin = (6R)-L-erythro-6,7-dihydrobiopterin + H2O. This chain is Putative pterin-4-alpha-carbinolamine dehydratase, found in Aeromonas salmonicida (strain A449).